A 341-amino-acid polypeptide reads, in one-letter code: S-adenosylmethionine:tRNA ribosyltransferase-isomerase (341 aa).

It belongs to the QueA family. Monomer.

It is found in the cytoplasm. The enzyme catalyses 7-aminomethyl-7-carbaguanosine(34) in tRNA + S-adenosyl-L-methionine = epoxyqueuosine(34) in tRNA + adenine + L-methionine + 2 H(+). It functions in the pathway tRNA modification; tRNA-queuosine biosynthesis. Functionally, transfers and isomerizes the ribose moiety from AdoMet to the 7-aminomethyl group of 7-deazaguanine (preQ1-tRNA) to give epoxyqueuosine (oQ-tRNA). The sequence is that of S-adenosylmethionine:tRNA ribosyltransferase-isomerase from Thermoanaerobacter sp. (strain X514).